Consider the following 449-residue polypeptide: MRVTFNDVKTSLGVTESYDIINAIRNSATDNFKTYVPLANAENVAEVGAGILVNQTVQNEFLTSLVDRIGLVIVKSISLRNPLAKFKKGALPMGRTIEEIFTDITKEKLYDAEEAEQKVFEREIPNVKTLFHERNRQSFYHQTIQDDSLKTAFISWGNFESFIASIINAIYNSAEVDEYEYMKLIIDNYYSKGLFKVVKVDDPMTSTGALTNFIKKARATALKMTLPQGTRDYNAMAVRTRSDIRDVHLFIDADLNAELDVDVLAKAFNMDRTTFLGNVTVIDGFASTGLKAVMVDKDWFMVYDTLQKMETIRNPRGLYWNYYYHVWQVLSASRFANAVAFVTGDDVPAVTQVIVSPAIASVKQGKSQAFTAYVRATDDKEHEVVWSVDGGSTGTSISSDGVLTVAANETNQLTVKATVDIGTADEPKPVVGEAVVNVRPDSSTGGAQA.

The BIG2 domain maps to 349 to 427; it reads AVTQVIVSPA…TVDIGTADEP (79 aa).

Belongs to the phi29likevirus major capsid protein family. Homohexamer. Homopentamer. The prolate capsid is composed of pentamers and hexamers of the capsid protein.

It is found in the virion. Its function is as follows. Assembles to form a prolate capsid shell of about 54 nm in length and 45 nm in width, with a T=3, Q=5 symmetry. This is Major capsid protein (8) from Bacillus subtilis (Bacteriophage B103).